The sequence spans 48 residues: Cytochrome b559 subunit beta (48 aa).

A helical membrane pass occupies residues Trp23–Ala39. His27 is a binding site for heme.

Belongs to the PsbE/PsbF family. In terms of assembly, heterodimer of an alpha subunit and a beta subunit. PSII is composed of 1 copy each of membrane proteins PsbA, PsbB, PsbC, PsbD, PsbE, PsbF, PsbH, PsbI, PsbJ, PsbK, PsbL, PsbM, PsbT, PsbX, PsbY, Psb30/Ycf12, peripheral proteins PsbO, CyanoQ (PsbQ), PsbU, PsbV and a large number of cofactors. It forms dimeric complexes. Requires heme b as cofactor.

It localises to the cellular thylakoid membrane. Its function is as follows. This b-type cytochrome is tightly associated with the reaction center of photosystem II (PSII). PSII is a light-driven water:plastoquinone oxidoreductase that uses light energy to abstract electrons from H(2)O, generating O(2) and a proton gradient subsequently used for ATP formation. It consists of a core antenna complex that captures photons, and an electron transfer chain that converts photonic excitation into a charge separation. The sequence is that of Cytochrome b559 subunit beta from Prochlorococcus marinus (strain SARG / CCMP1375 / SS120).